Reading from the N-terminus, the 222-residue chain is Collectrin (222 aa).

The first 14 residues, M1–A14, serve as a signal peptide directing secretion. At D15–P141 the chain is on the extracellular side. Residues A21 to L222 enclose the Collectrin-like domain. N76 and N93 each carry an N-linked (GlcNAc...) asparagine glycan. Residues I142 to I162 traverse the membrane as a helical segment. Topologically, residues I163–L222 are cytoplasmic. Phosphothreonine occurs at positions 214 and 220.

It belongs to the CLTRN family. Monomer. Homodimer; dimerization prevents CLTRN cleavage by BACE2. Interacts with SLC6A18; this interaction regulates the trafficking of SLC6A18 to the cell membrane and its amino acid transporter activity. Interacts with SLC6A19; this interaction regulates the trafficking of SLC6A19 to the cell membrane and its amino acid transporter activity. Interacts with SNAPIN. Post-translationally, glycosylated. Glycosylation is required for plasma membrane localization and for its cleavage by BACE2. Proteolytically processed in pancreatic beta cells by BACE2 leading to the generation and extracellular release of soluble CLTRN, and a corresponding cell-associated C-terminal fragment which is later cleaved by gamma-secretase. This shedding process inactivates CLTRN. Three cleavage sites have been identified for BACE2, two clustered sites after Phe-116 and Leu-118 and a more membrane proximal site at Phe-125; the preferred BACE2 cleavage site seems to be between Phe-125 and Leu-126, Phe-116 and Leu-118 act as alternative sites.

The protein localises to the cell membrane. In terms of biological role, plays an important role in amino acid transport by acting as binding partner of amino acid transporters SLC6A18 and SLC6A19, regulating their trafficking on the cell surface and their activity. May also play a role in trafficking of amino acid transporters SLC3A1 and SLC7A9 to the renal cortical cell membrane. Regulator of SNARE complex function. Stimulator of beta cell replication. The protein is Collectrin (CLTRN) of Bos taurus (Bovine).